The chain runs to 332 residues: 5-dehydro-2-deoxygluconokinase (332 aa).

The protein belongs to the carbohydrate kinase PfkB family.

It catalyses the reaction 5-dehydro-2-deoxy-D-gluconate + ATP = 6-phospho-5-dehydro-2-deoxy-D-gluconate + ADP + H(+). The protein operates within polyol metabolism; myo-inositol degradation into acetyl-CoA; acetyl-CoA from myo-inositol: step 5/7. Its function is as follows. Catalyzes the phosphorylation of 5-dehydro-2-deoxy-D-gluconate (2-deoxy-5-keto-D-gluconate or DKG) to 6-phospho-5-dehydro-2-deoxy-D-gluconate (DKGP). The polypeptide is 5-dehydro-2-deoxygluconokinase (Bacillus thuringiensis subsp. konkukian (strain 97-27)).